We begin with the raw amino-acid sequence, 1099 residues long: DNA-directed RNA polymerase subunit beta (1099 aa).

It belongs to the RNA polymerase beta chain family. In terms of assembly, in plastids the minimal PEP RNA polymerase catalytic core is composed of four subunits: alpha, beta, beta', and beta''. When a (nuclear-encoded) sigma factor is associated with the core the holoenzyme is formed, which can initiate transcription.

The protein localises to the plastid. It localises to the chloroplast. It catalyses the reaction RNA(n) + a ribonucleoside 5'-triphosphate = RNA(n+1) + diphosphate. In terms of biological role, DNA-dependent RNA polymerase catalyzes the transcription of DNA into RNA using the four ribonucleoside triphosphates as substrates. The protein is DNA-directed RNA polymerase subunit beta of Bigelowiella natans (Pedinomonas minutissima).